The sequence spans 335 residues: Probable UDP-N-acetylglucosamine pyrophosphorylase (335 aa).

The Substrate binding signature appears at Leu-45–Gly-48. UTP-binding positions include Leu-45 to Gly-48, Lys-59, Gln-120, and Gly-145. Asn-146 is a substrate binding site. Asp-170 is a binding site for UTP. Residues Glu-218 to Tyr-219 carry the Substrate binding motif. Position 278 (Lys-278) interacts with UTP. Lys-308 serves as a coordination point for substrate.

It belongs to the UDPGP type 1 family.

It localises to the cytoplasm. The enzyme catalyses N-acetyl-alpha-D-glucosamine 1-phosphate + UTP + H(+) = UDP-N-acetyl-alpha-D-glucosamine + diphosphate. Its pathway is nucleotide-sugar biosynthesis; UDP-N-acetyl-alpha-D-glucosamine biosynthesis; UDP-N-acetyl-alpha-D-glucosamine from N-acetyl-alpha-D-glucosamine 1-phosphate: step 1/1. This is Probable UDP-N-acetylglucosamine pyrophosphorylase (UAP1) from Encephalitozoon cuniculi (strain GB-M1) (Microsporidian parasite).